Reading from the N-terminus, the 710-residue chain is Protein Smaug homolog 1 (710 aa).

Disordered regions lie at residues 276 to 319 (ARGS…FQDE) and 441 to 476 (NQATESKDSASGGIQQHHIGNCESESGGVPLPESDL). Residues 309–318 (QSTACNTFQD) are compositionally biased toward polar residues. One can recognise an SAM domain in the interval 319–379 (EGSGMKDVPA…KIVISIQKLK (61 aa)).

The protein belongs to the SMAUG family.

The protein resides in the cytoplasm. It is found in the cell projection. The protein localises to the dendrite. It localises to the synapse. Its subcellular location is the synaptosome. Its function is as follows. Acts as a translational repressor. In Xenopus laevis (African clawed frog), this protein is Protein Smaug homolog 1 (samd4a).